A 261-amino-acid chain; its full sequence is Indole-3-glycerol phosphate synthase (261 aa).

It belongs to the TrpC family.

It carries out the reaction 1-(2-carboxyphenylamino)-1-deoxy-D-ribulose 5-phosphate + H(+) = (1S,2R)-1-C-(indol-3-yl)glycerol 3-phosphate + CO2 + H2O. It functions in the pathway amino-acid biosynthesis; L-tryptophan biosynthesis; L-tryptophan from chorismate: step 4/5. This chain is Indole-3-glycerol phosphate synthase, found in Paraburkholderia xenovorans (strain LB400).